Reading from the N-terminus, the 532-residue chain is Cytokinin dehydrogenase 8 (532 aa).

The first 26 residues, M1 to S26, serve as a signal peptide directing secretion. Residues V51–A238 form the FAD-binding PCMH-type domain. The FAD site is built by A87, G89, and G91. H92 is modified (pros-8alpha-FAD histidine). Residues S93, Q97, D162, T167, S173, I177, and I228 each contribute to the FAD site. An N-linked (GlcNAc...) asparagine glycan is attached at N420. FAD-binding residues include Y482 and Q520.

The protein belongs to the oxygen-dependent FAD-linked oxidoreductase family. Monomer. It depends on FAD as a cofactor.

It localises to the secreted. The protein resides in the extracellular space. It catalyses the reaction N(6)-dimethylallyladenine + A + H2O = 3-methyl-2-butenal + adenine + AH2. Catalyzes the oxidation of cytokinins, a family of N(6)-substituted adenine derivatives that are plant hormones, where the substituent is an isopentenyl group. This is Cytokinin dehydrogenase 8 (CKX8) from Oryza sativa subsp. indica (Rice).